The sequence spans 1202 residues: Putative late blight resistance protein homolog R1B-8 (1202 aa).

2 coiled-coil regions span residues 345 to 368 and 437 to 459; these read RYSD…ESLQ and LRMN…RLLN. In terms of domain architecture, NB-ARC spans 426-741; it reads IARTSSQLAR…ISESFIKSCE (316 aa). Position 471 to 478 (471 to 478) interacts with ATP; the sequence is GMPGLGKT. LRR repeat units follow at residues 865–889, 908–936, 1011–1036, 1040–1059, 1060–1084, 1086–1111, and 1128–1151; these read FKFL…LFYL, LWNL…VWDM, PIRL…ISAP, YLKL…TADH, LKHL…VSNG, FPQL…VFPN, and SCFM…VVQS.

It belongs to the disease resistance NB-LRR family.

The protein resides in the cytoplasm. It is found in the membrane. Functionally, confers resistance to late blight (Phytophthora infestans) races carrying the avirulence gene Avr1. Resistance proteins guard the plant against pathogens that contain an appropriate avirulence protein via an indirect interaction with this avirulence protein. That triggers a defense system including the hypersensitive response, which restricts the pathogen growth. This is Putative late blight resistance protein homolog R1B-8 (R1B-8) from Solanum demissum (Wild potato).